The chain runs to 339 residues: Biotin synthase (339 aa).

Residues Thr51–Arg278 form the Radical SAM core domain. Residues Cys66, Cys70, and Cys73 each contribute to the [4Fe-4S] cluster site. [2Fe-2S] cluster is bound by residues Cys110, Cys141, Cys201, and Arg273.

It belongs to the radical SAM superfamily. Biotin synthase family. Homodimer. [4Fe-4S] cluster is required as a cofactor. The cofactor is [2Fe-2S] cluster.

The catalysed reaction is (4R,5S)-dethiobiotin + (sulfur carrier)-SH + 2 reduced [2Fe-2S]-[ferredoxin] + 2 S-adenosyl-L-methionine = (sulfur carrier)-H + biotin + 2 5'-deoxyadenosine + 2 L-methionine + 2 oxidized [2Fe-2S]-[ferredoxin]. The protein operates within cofactor biosynthesis; biotin biosynthesis; biotin from 7,8-diaminononanoate: step 2/2. Functionally, catalyzes the conversion of dethiobiotin (DTB) to biotin by the insertion of a sulfur atom into dethiobiotin via a radical-based mechanism. In Janthinobacterium sp. (strain Marseille) (Minibacterium massiliensis), this protein is Biotin synthase.